The sequence spans 479 residues: Glutamyl-tRNA(Gln) amidotransferase subunit A (479 aa).

Active-site charge relay system residues include Lys-71 and Ser-146. The active-site Acyl-ester intermediate is the Ser-170.

The protein belongs to the amidase family. GatA subfamily. In terms of assembly, heterotrimer of A, B and C subunits.

It carries out the reaction L-glutamyl-tRNA(Gln) + L-glutamine + ATP + H2O = L-glutaminyl-tRNA(Gln) + L-glutamate + ADP + phosphate + H(+). Functionally, allows the formation of correctly charged Gln-tRNA(Gln) through the transamidation of misacylated Glu-tRNA(Gln) in organisms which lack glutaminyl-tRNA synthetase. The reaction takes place in the presence of glutamine and ATP through an activated gamma-phospho-Glu-tRNA(Gln). This Lactobacillus acidophilus (strain ATCC 700396 / NCK56 / N2 / NCFM) protein is Glutamyl-tRNA(Gln) amidotransferase subunit A.